A 646-amino-acid polypeptide reads, in one-letter code: Serine/threonine-protein kinase max-2 (646 aa).

The segment at 19-40 (FSPSDKDKDRDDEMKPSSSAMD) is disordered. A compositionally biased stretch (basic and acidic residues) spans 22-33 (SDKDKDRDDEMK). The region spanning 41-54 (ISQPYNTVHRVHVG) is the CRIB domain. Positions 136-345 (LQCSNGSATS…PPPPEEPPVR (210 aa)) are disordered. Composition is skewed to low complexity over residues 142 to 157 (SATSPSTSVSASSSSA) and 167 to 180 (LSTASSTDTSLSLS). Positions 196-205 (SAPQLKTFTG) are enriched in polar residues. A compositionally biased stretch (pro residues) spans 214–223 (SPFPPQPPVL). Positions 229–245 (TASAVATTTTNPTTSNG) are enriched in low complexity. Residues 246–262 (APPPVPGSKGPPVPPKP) are compositionally biased toward pro residues. Low complexity-rich tracts occupy residues 273–307 (SSGCSSPQQYSSARSVGNSLSNGSVVSTTSSDGDV) and 323–334 (KNGNTTTNKTTV). Positions 376–627 (YEMKKQIGVG…TTELLAHPFL (252 aa)) constitute a Protein kinase domain. ATP is bound by residues 382–390 (IGVGASGTV) and K405. The active-site Proton acceptor is D496.

Belongs to the protein kinase superfamily. STE Ser/Thr protein kinase family. STE20 subfamily. In terms of assembly, interacts with mlk-1; the interaction is independent of max-2 and mlk-1 kinase activities. Interacts with mig-2 (GTP-bound form). Mg(2+) is required as a cofactor.

The protein localises to the perikaryon. Its subcellular location is the cell projection. It localises to the dendrite. It is found in the cytoplasm. It catalyses the reaction L-seryl-[protein] + ATP = O-phospho-L-seryl-[protein] + ADP + H(+). The enzyme catalyses L-threonyl-[protein] + ATP = O-phospho-L-threonyl-[protein] + ADP + H(+). Functionally, serine/threonine-protein kinase, which phosphorylates mlk-1. Involved in the stress response to heavy metals by activating the mlk-1/mek-1/kgb-1 pathway. In ventral cord commissural motoneurons, required for dorsal axon guidance downstream of unc-6/netrin repulsion receptor unc-5 and probably of Rho GTPases ced-10 and mig-2. Plays a redundant role with mig-10 in orientating axonal growth of HSN neurons. Plays a redundant role with pak-1 in P neuroblast migration and in distal tip cell (DTC)-mediated guidance of gonad elongation probably downstream of Rho GTPases. In association with pak-2, plays a role in embryogenesis. In association with pak-1, may be involved in spermatogenesis. In Caenorhabditis elegans, this protein is Serine/threonine-protein kinase max-2.